A 343-amino-acid polypeptide reads, in one-letter code: Lipase chaperone (343 aa).

A helical membrane pass occupies residues 7-27 (IYLGIGLVALLMIFIYWLMPK).

The protein belongs to the lipase chaperone family.

It is found in the cell inner membrane. Functionally, may be involved in the folding of the extracellular lipase during its passage through the periplasm. The protein is Lipase chaperone (lifO) of Acinetobacter baylyi (strain ATCC 33305 / BD413 / ADP1).